The sequence spans 362 residues: Flotillin-like protein FloA 2 (362 aa).

The helical transmembrane segment at T24–F44 threads the bilayer.

It belongs to the flotillin-like FloA family. Homooligomerizes.

It is found in the cell membrane. Its subcellular location is the membrane raft. Its function is as follows. Found in functional membrane microdomains (FMM) that may be equivalent to eukaryotic membrane rafts. FMMs are highly dynamic and increase in number as cells age. Flotillins are thought to be important factors in membrane fluidity. The sequence is that of Flotillin-like protein FloA 2 from Rhodopirellula baltica (strain DSM 10527 / NCIMB 13988 / SH1).